The primary structure comprises 149 residues: Chromophore lyase CpcS/CpeS homolog (149 aa).

The protein belongs to the CpcS/CpeS biliprotein lyase family.

The protein resides in the plastid. Its subcellular location is the chloroplast. Its function is as follows. Might function to covalently attach a chromophore to Cys residue(s) of phycobiliproteins. The protein is Chromophore lyase CpcS/CpeS homolog of Porphyra purpurea (Red seaweed).